The chain runs to 367 residues: Anhydro-N-acetylmuramic acid kinase (367 aa).

10 to 17 (GTSLDGVD) contacts ATP.

The protein belongs to the anhydro-N-acetylmuramic acid kinase family.

It catalyses the reaction 1,6-anhydro-N-acetyl-beta-muramate + ATP + H2O = N-acetyl-D-muramate 6-phosphate + ADP + H(+). The protein operates within amino-sugar metabolism; 1,6-anhydro-N-acetylmuramate degradation. It functions in the pathway cell wall biogenesis; peptidoglycan recycling. Catalyzes the specific phosphorylation of 1,6-anhydro-N-acetylmuramic acid (anhMurNAc) with the simultaneous cleavage of the 1,6-anhydro ring, generating MurNAc-6-P. Is required for the utilization of anhMurNAc either imported from the medium or derived from its own cell wall murein, and thus plays a role in cell wall recycling. The chain is Anhydro-N-acetylmuramic acid kinase from Aliivibrio fischeri (strain ATCC 700601 / ES114) (Vibrio fischeri).